The primary structure comprises 101 residues: A-type ATP synthase subunit K (101 aa).

Helical transmembrane passes span 5–25 (WLPF…AQAP), 37–57 (IGAG…VGMA), and 75–95 (ILIF…FAVL).

The protein belongs to the V-ATPase proteolipid subunit family. In terms of assembly, has multiple subunits with at least A(3), B(3), C, D, E, F, H, I and proteolipid K(x). In terms of processing, the N-terminus is blocked.

It localises to the cell membrane. Its function is as follows. Component of the A-type ATP synthase that produces ATP from ADP in the presence of a proton gradient across the membrane. This Sulfurisphaera tokodaii (strain DSM 16993 / JCM 10545 / NBRC 100140 / 7) (Sulfolobus tokodaii) protein is A-type ATP synthase subunit K.